The primary structure comprises 201 residues: ATP-dependent Clp protease proteolytic subunit 2 (201 aa).

The active-site Nucleophile is Ser98. His123 is an active-site residue.

Belongs to the peptidase S14 family. Fourteen ClpP subunits assemble into 2 heptameric rings which stack back to back to give a disk-like structure with a central cavity, resembling the structure of eukaryotic proteasomes.

It localises to the cytoplasm. The catalysed reaction is Hydrolysis of proteins to small peptides in the presence of ATP and magnesium. alpha-casein is the usual test substrate. In the absence of ATP, only oligopeptides shorter than five residues are hydrolyzed (such as succinyl-Leu-Tyr-|-NHMec, and Leu-Tyr-Leu-|-Tyr-Trp, in which cleavage of the -Tyr-|-Leu- and -Tyr-|-Trp bonds also occurs).. Cleaves peptides in various proteins in a process that requires ATP hydrolysis. Has a chymotrypsin-like activity. Plays a major role in the degradation of misfolded proteins. This chain is ATP-dependent Clp protease proteolytic subunit 2, found in Pseudomonas aeruginosa (strain ATCC 15692 / DSM 22644 / CIP 104116 / JCM 14847 / LMG 12228 / 1C / PRS 101 / PAO1).